The primary structure comprises 564 residues: MRSDEIKKGFQRAPHRSLLRATGLKDEDFEKPFIGVANSFIEIIPGHFFLNKYAAIIKDEIRKCGCVPFEFNTIGVDDGIAMGHDGMLYSLPSREIIANSIETVMNAHKLDALICIPNCDKITPGMIMGALRVNVPTIFVSGGPMKAGKLSDGTPIDLATAFEAVGKVAKGEMSEEELYQIECEACPSGGSCSGMFTANSMNTLMEAMGIALKGNGTILALTPEREELLRKAARRICEIAKDEKLTQEYKIRNILNEKAIHNAFVVDMAMGGSTNTVLHMMAISKEAGVDFPLSKLNEISKHVAHIAKISPSLQTVHMEDINKAGGVSAVMKEASKRSDTVLYLDNPVIEGGTIGDRIKDAEVIDTSIIHPIDKPYSEVGGLAILFGNLAEEGAVVKTAGIDPNMREFTGKAICFDSQQEAIDGILGGKVKPGHVVVIRYEGPKGGPGMQEMLAPTSLIAGMNLGDKVALITDGRFSGATRGASIGHVSPEAAEGGVIGLLQDGDEIYINVDTYTLEVKLSDEELEERRKNFKPKVKDIKGRWLRQYRSLVTNAANGAVLKDEC.

Asp-78 contributes to the Mg(2+) binding site. Cys-119 is a [2Fe-2S] cluster binding site. The Mg(2+) site is built by Asp-120 and Lys-121. Lys-121 carries the post-translational modification N6-carboxylysine. Residue Cys-192 coordinates [2Fe-2S] cluster. Glu-451 contacts Mg(2+). The Proton acceptor role is filled by Ser-477.

Belongs to the IlvD/Edd family. As to quaternary structure, homodimer. The cofactor is [2Fe-2S] cluster. Mg(2+) serves as cofactor.

It catalyses the reaction (2R)-2,3-dihydroxy-3-methylbutanoate = 3-methyl-2-oxobutanoate + H2O. The enzyme catalyses (2R,3R)-2,3-dihydroxy-3-methylpentanoate = (S)-3-methyl-2-oxopentanoate + H2O. It functions in the pathway amino-acid biosynthesis; L-isoleucine biosynthesis; L-isoleucine from 2-oxobutanoate: step 3/4. Its pathway is amino-acid biosynthesis; L-valine biosynthesis; L-valine from pyruvate: step 3/4. In terms of biological role, functions in the biosynthesis of branched-chain amino acids. Catalyzes the dehydration of (2R,3R)-2,3-dihydroxy-3-methylpentanoate (2,3-dihydroxy-3-methylvalerate) into 2-oxo-3-methylpentanoate (2-oxo-3-methylvalerate) and of (2R)-2,3-dihydroxy-3-methylbutanoate (2,3-dihydroxyisovalerate) into 2-oxo-3-methylbutanoate (2-oxoisovalerate), the penultimate precursor to L-isoleucine and L-valine, respectively. The chain is Dihydroxy-acid dehydratase from Nitratiruptor sp. (strain SB155-2).